The sequence spans 337 residues: Ribose-phosphate pyrophosphokinase 4 (337 aa).

An N-acetylserine modification is found at S2. D158 and H160 together coordinate Mg(2+). The interval 241-256 (GCHVVIVDDLVQSGGT) is binding of phosphoribosylpyrophosphate.

The protein belongs to the ribose-phosphate pyrophosphokinase family.

It carries out the reaction D-ribose 5-phosphate + ATP = 5-phospho-alpha-D-ribose 1-diphosphate + AMP + H(+). The sequence is that of Ribose-phosphate pyrophosphokinase 4 (PRS4) from Arabidopsis thaliana (Mouse-ear cress).